A 772-amino-acid polypeptide reads, in one-letter code: MAAESALQVVEKLQARLAANPDPKKLLKYLKKLSTLPITVDILAETGVGKTVNSLRKHEHVGSFARDLVAQWKKLVPVERNAEPDEQDFEKSNSRKRPRDALQKEEEMEGDYQETWKATGSRSYSPDHRQKKHRKLSELERPHKVSHGHERRDERKRCHRMSPTYSSDPESSDYGHVQSPPSCTSPHQMYVDHYRSLEEDQEPIVSHQKPGKGHSNAFQDRLGASQERHLGEPHGKGVVSQNKEHKSSHKDKRPVDAKSDEKASVVSREKSHKALSKEENRRPPSGDNAREKPPSSGVKKEKDREGSSLKKKCLPPSEAASDNHLKKPKHRDPEKAKLDKSKQGLDSFDTGKGAGDLLPKVKEKGSNNLKTPEGKVKTNLDRKSLGSLPKVEETDMEDEFEQPTMSFESYLSYDQPRKKKKKIVKTSATALGDKGLKKNDSKSTGKNLDSVQKLPKVNKTKSEKPAGADLAKLRKVPDVLPVLPDLPLPAIQANYRPLPSLELISSFQPKRKAFSSPQEEEEAGFTGRRMNSKMQVYSGSKCAYLPKMMTLHQQCIRVLKNNIDSIFEVGGVPYSVLEPVLERCTPDQLYRIEEYNHVLIEETDQLWKVHCHRDFKEERPEEYESWREMYLRLQDAREQRLRVLTKNIQFAHANKPKGRQAKMAFVNSVAKPPRDVRRRQEKFGTGGAAVPEKIKIKPAPYPMGSSHASASSISFNPSPEEPAYDGPSTSSAHLAPVVSSTVSYDPRKPTVKKIAPMMAKTIKAFKNRFSRR.

Positions 4 to 79 (ESALQVVEKL…AQWKKLVPVE (76 aa)) constitute a TFIIS N-terminal domain. 2 stretches are compositionally biased toward basic and acidic residues: residues 79–105 (ERNA…LQKE) and 136–156 (LSEL…DERK). 2 disordered regions span residues 79–403 (ERNA…FEQP) and 418–466 (KKKK…EKPA). Serine 196 carries the phosphoserine modification. Basic and acidic residues-rich tracts occupy residues 226-235 (QERHLGEPHG), 253-269 (RPVD…VSRE), 275-308 (LSKE…EGSS), 321-343 (SDNH…KSKQ), and 372-384 (PEGK…DRKS). Phosphoserine is present on residues serine 384 and serine 387. At threonine 394 the chain carries Phosphothreonine. Position 434 is an N6-acetyllysine (lysine 434). A compositionally biased stretch (basic and acidic residues) spans 434 to 443 (KGLKKNDSKS). Serine 516 carries the post-translational modification Phosphoserine. The segment at 522 to 681 (EAGFTGRRMN…PPRDVRRRQE (160 aa)) is activation domain. The BC-box stretch occupies residues 550–559 (TLHQQCIRVL). One can recognise an F-box domain in the interval 566–610 (IFEVGGVPYSVLEPVLERCTPDQLYRIEEYNHVLIEETDQLWKVH). The interval 674-732 (RDVRRRQEKFGTGGAAVPEKIKIKPAPYPMGSSHASASSISFNPSPEEPAYDGPSTSSA) is disordered. Residues 705 to 714 (SSHASASSIS) show a composition bias toward low complexity.

In terms of assembly, heterotrimer of an A (ELOA, ELOA2 or ELOA3P), ELOB and ELOC subunit. Part of a multisubunit ubiquitin ligase complex consisting of elongin BC complex (ELOB and ELOC), elongin A/ELOA, RBX1 and CUL5. Interacts with ERCC6; the interaction is induced by DNA damaging agents or inhibitors of RNA polymerase II elongation. Interacts (via BC-box) with CUL5.

It is found in the nucleus. Its function is as follows. SIII, also known as elongin, is a general transcription elongation factor that increases the RNA polymerase II transcription elongation past template-encoded arresting sites. Subunit A is transcriptionally active and its transcription activity is strongly enhanced by binding to the dimeric complex of the SIII regulatory subunits B and C (elongin BC complex). In terms of biological role, as part of a multisubunit complex composed of elongin BC complex (ELOB and ELOC), elongin A/ELOA, RBX1 and CUL5; polyubiquitinates monoubiquitinated POLR2A. This Homo sapiens (Human) protein is Elongin-A.